Here is a 451-residue protein sequence, read N- to C-terminus: MSAKLSESDLNDFIGAQVACVKPTRTLHTADEGDEALEVGKEPQEATKVSISLQDCLACAGCITSSEEILLSRQSHGVFLEAWRSLAPKALAVSVAPQSRLSLAQHFGLSVAELDQCLSGVLGSYFGAKYVVGTQLGRELSVQQTNARLVERKQQGVQGPLLCSVCPGFVLYAEKTKPGLVPYMLDVKSPQQITGALLHAADPNIYHLSLMPCFDKKLEAAREDCAREVDCVLTPREFVALLDELQLDLHSFAGAAVPIAQLTPPGWDPRVSWCSSAGSSSGGYAYQYILHMQRLHPGSTIATQAGRNADLLEHRLLAPSGVLLASAGELYGFRNIQNLVRKLLSPATKRSAKVVRRRLPQASPAPPATDPCNADFIEVMACPSGCINGGGLLNGGLGPSQRRDLVSQLNEGYARLPTLDIPMPTYSQPSYIYNLRPLAPTDDVLTVANAW.

[4Fe-4S] cluster is bound by residues Cys20, Cys56, Cys59, Cys62, Cys166, Cys213, Cys382, and Cys386.

It belongs to the NARF family.

In terms of biological role, component of the cytosolic Fe/S protein assembly machinery. Required for maturation of extramitochondrial Fe/S proteins. May play a role in the transfer of pre-assembled Fe/S clusters to target apoproteins. In Eremothecium gossypii (strain ATCC 10895 / CBS 109.51 / FGSC 9923 / NRRL Y-1056) (Yeast), this protein is Cytosolic Fe-S cluster assembly factor NAR1 (NAR1).